A 438-amino-acid polypeptide reads, in one-letter code: Elongation factor 1-alpha (438 aa).

One can recognise a tr-type G domain in the interval K5–K228. The tract at residues G14 to S21 is G1. G14–S21 contacts GTP. S21 contributes to the Mg(2+) binding site. Positions G70–A74 are G2. The segment at D91–G94 is G3. Residues D91–H95 and N153–D156 each bind GTP. Residues N153–D156 form a G4 region. Residues S194 to W196 are G5.

Belongs to the TRAFAC class translation factor GTPase superfamily. Classic translation factor GTPase family. EF-Tu/EF-1A subfamily.

It localises to the cytoplasm. The enzyme catalyses GTP + H2O = GDP + phosphate + H(+). Its function is as follows. GTP hydrolase that promotes the GTP-dependent binding of aminoacyl-tRNA to the A-site of ribosomes during protein biosynthesis. This Staphylothermus marinus (strain ATCC 43588 / DSM 3639 / JCM 9404 / F1) protein is Elongation factor 1-alpha.